Reading from the N-terminus, the 426-residue chain is Eukaryotic translation initiation factor 3 subunit M (426 aa).

Positions 179 to 350 constitute a PCI domain; sequence DDEDSYRYLI…KVFLVHRTTY (172 aa). Basic and acidic residues predominate over residues 385–401; sequence DVEGQREREQQELERKL. Positions 385-426 are disordered; that stretch reads DVEGQREREQQELERKLAGAGMGGGPGGDRRRQQKPRTDEDD.

This sequence belongs to the eIF-3 subunit M family. As to quaternary structure, component of the eukaryotic translation initiation factor 3 (eIF-3) complex.

The protein resides in the cytoplasm. Its function is as follows. Component of the eukaryotic translation initiation factor 3 (eIF-3) complex, which is involved in protein synthesis of a specialized repertoire of mRNAs and, together with other initiation factors, stimulates binding of mRNA and methionyl-tRNAi to the 40S ribosome. The eIF-3 complex specifically targets and initiates translation of a subset of mRNAs involved in cell proliferation. The protein is Eukaryotic translation initiation factor 3 subunit M of Chaetomium globosum (strain ATCC 6205 / CBS 148.51 / DSM 1962 / NBRC 6347 / NRRL 1970) (Soil fungus).